Here is a 522-residue protein sequence, read N- to C-terminus: Probable G-protein coupled receptor egl-47 (522 aa).

The next 7 helical transmembrane spans lie at 140-160, 184-204, 238-258, 276-296, 345-365, 398-418, and 472-492; these read IIKL…NSFL, ASMI…LSAI, FVFF…KVVE, FILV…YHLY, PLLL…LYFL, ICWA…ICST, and LERT…LLLF.

It belongs to the G-protein coupled receptor family. In terms of tissue distribution, expressed in some neurons in the head, the HSN neurons and the PVQ interneurons of the tail.

It is found in the membrane. Orphan receptor. Regulates egg-laying probably by activating guanine nucleotide-binding protein goa-1, in the hermaphrodite-specific neurons (HSNs). In Caenorhabditis elegans, this protein is Probable G-protein coupled receptor egl-47.